Here is a 245-residue protein sequence, read N- to C-terminus: 1-acyl-sn-glycerol-3-phosphate acyltransferase (245 aa).

Position 1 is an N-formylmethionine (methionine 1). The short motif at histidine 73–aspartate 78 is the HXXXXD motif element.

It belongs to the 1-acyl-sn-glycerol-3-phosphate acyltransferase family.

It localises to the cell inner membrane. It carries out the reaction a 1-acyl-sn-glycero-3-phosphate + an acyl-CoA = a 1,2-diacyl-sn-glycero-3-phosphate + CoA. It catalyses the reaction a fatty acyl-[ACP] + a 1-acyl-sn-glycero-3-phosphate = a 1,2-diacyl-sn-glycero-3-phosphate + holo-[ACP]. Its pathway is phospholipid metabolism; CDP-diacylglycerol biosynthesis; CDP-diacylglycerol from sn-glycerol 3-phosphate: step 2/3. In terms of biological role, converts lysophosphatidic acid (LPA) into phosphatidic acid by incorporating an acyl moiety at the 2 position. This enzyme can utilize either acyl-CoA or acyl-ACP as the fatty acyl donor. The protein is 1-acyl-sn-glycerol-3-phosphate acyltransferase (plsC) of Escherichia coli (strain K12).